Reading from the N-terminus, the 402-residue chain is Imidazolonepropionase (402 aa).

2 residues coordinate Fe(3+): H66 and H68. The Zn(2+) site is built by H66 and H68. R75, Y138, and H171 together coordinate 4-imidazolone-5-propanoate. Y138 contributes to the N-formimidoyl-L-glutamate binding site. Fe(3+) is bound at residue H236. H236 contributes to the Zn(2+) binding site. A 4-imidazolone-5-propanoate-binding site is contributed by Q239. D311 serves as a coordination point for Fe(3+). D311 provides a ligand contact to Zn(2+). 2 residues coordinate N-formimidoyl-L-glutamate: N313 and G315. T316 lines the 4-imidazolone-5-propanoate pocket.

It belongs to the metallo-dependent hydrolases superfamily. HutI family. Zn(2+) is required as a cofactor. Requires Fe(3+) as cofactor.

The protein resides in the cytoplasm. The enzyme catalyses 4-imidazolone-5-propanoate + H2O = N-formimidoyl-L-glutamate. It functions in the pathway amino-acid degradation; L-histidine degradation into L-glutamate; N-formimidoyl-L-glutamate from L-histidine: step 3/3. Its function is as follows. Catalyzes the hydrolytic cleavage of the carbon-nitrogen bond in imidazolone-5-propanoate to yield N-formimidoyl-L-glutamate. It is the third step in the universal histidine degradation pathway. In Vibrio cholerae serotype O1 (strain ATCC 39541 / Classical Ogawa 395 / O395), this protein is Imidazolonepropionase.